The sequence spans 378 residues: Envelope glycoprotein M (378 aa).

The Intravirion segment spans residues 1–16; that stretch reads MKSSKSDLFIYKTWFK. A helical membrane pass occupies residues 17–37; it reads LLVLYFVMFVLSATVPIAASF. Residues 38 to 84 are Virion surface-facing; the sequence is PGLGFPCYYNALVNYSAINLTERNVAKHLTPTLYLEEPEMFAYMTFT. Residues 85-105 traverse the membrane as a helical segment; sequence FLVDCFAAVYYFLGALAIMLA. Over 106–118 the chain is Intravirion; the sequence is KRHFVVSLTTLSQ. Residues 119-139 form a helical membrane-spanning segment; that stretch reads WIAMVGTPTLILIGMWRMWTI. Residues 140–150 lie on the Virion surface side of the membrane; sequence QLFIQTLSYKH. A helical membrane pass occupies residues 151–171; sequence IYLSAFVYLIHFLLSFLHTQC. Topologically, residues 172–210 are intravirion; it reads YISRNSQLWSLKVLEQGIPPNTLLDTVVFTIKPLLANCQ. The helical transmembrane segment at 211–231 threads the bilayer; sequence LFCLGLEMLVFSLSFMMAIGN. The Virion surface portion of the chain corresponds to 232–239; sequence SFYVLVSD. The chain crosses the membrane as a helical span at residues 240-260; sequence IVFGAINLYLALVLFWVLLTE. Residues 261–268 lie on the Intravirion side of the membrane; that stretch reads LYLVKYMT. The chain crosses the membrane as a helical span at residues 269–289; it reads FVMGFYLGGLIGCIFLLVPLW. Topologically, residues 290–303 are virion surface; sequence RYEQIFVAANLRSP. The chain crosses the membrane as a helical span at residues 304–324; sequence ILINILVIFFLCTLSALVRLL. Over 325 to 378 the chain is Intravirion; it reads RMTWFSPTKPSYEPIQLKNIKHRRVKLQSPSGPSILEEGSSDEGSEDSEEEEEL. Positions 347–378 are disordered; the sequence is RRVKLQSPSGPSILEEGSSDEGSEDSEEEEEL. A compositionally biased stretch (acidic residues) spans 363 to 378; it reads GSSDEGSEDSEEEEEL.

The protein belongs to the herpesviridae glycoprotein M family. Interacts (via N-terminus) with gN (via N-terminus). The gM-gN heterodimer forms the gCII complex.

The protein localises to the virion membrane. Its subcellular location is the host Golgi apparatus. The protein resides in the host trans-Golgi network. It is found in the host endosome membrane. It localises to the host nucleus inner membrane. Envelope glycoprotein important for virion assembly and egress. Plays a role in the correct incorporation of gH-gL into virion membrane. Directs the glycoprotein N (gN) to the host trans-Golgi network. In Equus caballus (Horse), this protein is Envelope glycoprotein M.